Consider the following 170-residue polypeptide: Fimbrial protein (170 aa).

The propeptide occupies 1-7 (MNTLQKG). Residue phenylalanine 8 is modified to N-methylphenylalanine. The chain crosses the membrane as a helical span at residues 8 to 28 (FTLIELMIVIAIVGILAAVAL). Serine 70 is a glycosylation site (O-linked (Gal...) serine). Serine 100 carries the post-translational modification O-(sn-1-glycerophosphoryl)serine. A disulfide bridge links cysteine 127 with cysteine 163.

The protein belongs to the N-Me-Phe pilin family. As to quaternary structure, the pili are polar flexible filaments of about 5.4 nanometers diameter and 2.5 micrometers average length; they consist of only a single polypeptide chain arranged in a helical configuration of five subunits per turn in the assembled pilus. In terms of processing, O-linked glycan consists of GlcNAc-Gal disaccharide.

Its subcellular location is the fimbrium. The protein resides in the membrane. Its function is as follows. Major component of the type IV pilus (T4P) that plays a role in cellular adherence, microcolony formation as well as twitching motility. The protein is Fimbrial protein (pilE) of Neisseria meningitidis serogroup A / serotype 4A (strain DSM 15465 / Z2491).